The primary structure comprises 337 residues: tRNA-dihydrouridine synthase B (337 aa).

Residues 19–21 and Gln-73 each bind FMN; that span reads PMA. The active-site Proton donor is Cys-103. FMN is bound by residues Lys-142, 203 to 205, and 227 to 228; these read NGD and GR.

This sequence belongs to the Dus family. DusB subfamily. FMN is required as a cofactor.

The catalysed reaction is a 5,6-dihydrouridine in tRNA + NAD(+) = a uridine in tRNA + NADH + H(+). It carries out the reaction a 5,6-dihydrouridine in tRNA + NADP(+) = a uridine in tRNA + NADPH + H(+). In terms of biological role, catalyzes the synthesis of 5,6-dihydrouridine (D), a modified base found in the D-loop of most tRNAs, via the reduction of the C5-C6 double bond in target uridines. In Pseudomonas syringae pv. tomato (strain ATCC BAA-871 / DC3000), this protein is tRNA-dihydrouridine synthase B.